The following is a 494-amino-acid chain: Serine/threonine-protein kinase PBL13 (494 aa).

Cys-4 is lipidated: S-palmitoyl cysteine. Thr-65 carries the phosphothreonine modification. A Protein kinase domain is found at 76 to 356 (FSSSNFLGEG…STVVSVLQDI (281 aa)). ATP-binding positions include 82–90 (LGEGGFGPV) and Lys-111. At Tyr-156 the chain carries Phosphotyrosine. Residue Asp-206 is the Proton acceptor of the active site. Position 210 is a phosphoserine (Ser-210). Residue Ser-240 is modified to Phosphoserine; by autocatalysis. 2 positions are modified to phosphothreonine: Thr-241 and Thr-246. Phosphotyrosine is present on Tyr-254. Residue Ser-321 is modified to Phosphoserine; by autocatalysis. 2 positions are modified to phosphothreonine; by autocatalysis: Thr-323 and Thr-383. Ser-384 is subject to Phosphoserine; by autocatalysis. Phosphothreonine; by autocatalysis is present on residues Thr-395, Thr-398, Thr-406, Thr-413, Thr-421, and Thr-428. Ser-429 is modified (phosphoserine; by autocatalysis). The interval 434–471 (DKTRREVKETSLQNFDKPRNVSTTDNHQKFRSPAHTAR) is disordered. At Thr-443 the chain carries Phosphothreonine; by autocatalysis. A compositionally biased stretch (polar residues) spans 443 to 458 (TSLQNFDKPRNVSTTD). Residues Ser-444 and Ser-455 each carry the phosphoserine; by autocatalysis modification. Phosphothreonine; by autocatalysis is present on Thr-456. Residues 462-471 (KFRSPAHTAR) show a composition bias toward basic residues. Tyr-481 is subject to Phosphotyrosine; by autocatalysis.

It belongs to the protein kinase superfamily. Ser/Thr protein kinase family. As to quaternary structure, interacts with RBHOD. Interaction is disrupted by flagellin-induced immune signaling.

It localises to the cell membrane. The catalysed reaction is L-seryl-[protein] + ATP = O-phospho-L-seryl-[protein] + ADP + H(+). The enzyme catalyses L-threonyl-[protein] + ATP = O-phospho-L-threonyl-[protein] + ADP + H(+). Its function is as follows. Involved in defense responses. Acts as a negative regulator of plant immune responses. This chain is Serine/threonine-protein kinase PBL13, found in Arabidopsis thaliana (Mouse-ear cress).